Here is an 812-residue protein sequence, read N- to C-terminus: 1,4-alpha-glucan branching enzyme GlgB (812 aa).

Over residues 1-11 (MNNGDVNNGTA) the composition is skewed to polar residues. The interval 1–83 (MNNGDVNNGT…SALPADPPAV (83 aa)) is disordered. Low complexity predominate over residues 49-64 (SSASAQPGQTADDPAV). The span at 65–83 (PSAPPSAPPSALPADPPAV) shows a compositional bias: pro residues. The Nucleophile role is filled by aspartate 490. Glutamate 543 (proton donor) is an active-site residue.

Belongs to the glycosyl hydrolase 13 family. GlgB subfamily. As to quaternary structure, monomer.

It carries out the reaction Transfers a segment of a (1-&gt;4)-alpha-D-glucan chain to a primary hydroxy group in a similar glucan chain.. The protein operates within glycan biosynthesis; glycogen biosynthesis. Catalyzes the formation of the alpha-1,6-glucosidic linkages in glycogen by scission of a 1,4-alpha-linked oligosaccharide from growing alpha-1,4-glucan chains and the subsequent attachment of the oligosaccharide to the alpha-1,6 position. This chain is 1,4-alpha-glucan branching enzyme GlgB, found in Frankia casuarinae (strain DSM 45818 / CECT 9043 / HFP020203 / CcI3).